The following is a 342-amino-acid chain: Foldase protein PrsA (342 aa).

A signal peptide spans 1 to 20 (MKKKLILAAAGAMAVFSLAA). A lipid anchor (N-palmitoyl cysteine) is attached at Cys21. Cys21 carries S-diacylglycerol cysteine lipidation. A PpiC domain is found at 142–235 (HPEVEAQIIQ…QTYQTTYYVV (94 aa)). The segment at 297 to 342 (MQTESSSASSEKKESKSSDSKTSDTKTSDSEKATDSSSKTTESSSK) is disordered. Over residues 306–330 (SEKKESKSSDSKTSDTKTSDSEKAT) the composition is skewed to basic and acidic residues. Positions 331 to 342 (DSSSKTTESSSK) are enriched in low complexity.

This sequence belongs to the PrsA family.

The protein resides in the cell membrane. It catalyses the reaction [protein]-peptidylproline (omega=180) = [protein]-peptidylproline (omega=0). Functionally, plays a major role in protein secretion by helping the post-translocational extracellular folding of several secreted proteins. This chain is Foldase protein PrsA, found in Enterococcus faecalis (strain ATCC 700802 / V583).